We begin with the raw amino-acid sequence, 382 residues long: MKITKLTTYRLPPRWMFLKIETDEGVVGWGEPVIEGRARTVEAAVHELGEYLIGQDPARINDLWQVMYRGGFYRGGPILMSAIAGIDQALWDIKGKVLNAPVWQLMGGLVRDKIKAYSWVGGDRPAEVIAGIKTLRQIGFDTFKLNGCEELGIIDDSRKVDAAVNTVAQIREEFGSDIEFGLDFHGRVSAPMAKILIKELEPYRPLFIEEPVLAEQAEYYPRLAAQTHIPIAAGERMFSRFEFKRVLEAGGLAILQPDLSHAGGITECAKIAAMAEAYDVGLAPHCPLGPIALAACLHVDFISRNAVFQEQSMGIHYNQGAELLDFVKNKDDFKMEGGYFQPLMKPGLGVEIDEEQVVARSQGCADWRNPLWRHADGSVAEW.

Asp-183 contributes to the Mg(2+) binding site. The Proton donor role is filled by His-185. The Mg(2+) site is built by Glu-209 and Glu-235. The active-site Proton acceptor is the His-285.

It belongs to the mandelate racemase/muconate lactonizing enzyme family. GalD subfamily. Requires Mg(2+) as cofactor.

It catalyses the reaction D-galactonate = 2-dehydro-3-deoxy-D-galactonate + H2O. It functions in the pathway carbohydrate acid metabolism; D-galactonate degradation; D-glyceraldehyde 3-phosphate and pyruvate from D-galactonate: step 1/3. Its function is as follows. Catalyzes the dehydration of D-galactonate to 2-keto-3-deoxy-D-galactonate. This chain is D-galactonate dehydratase, found in Cronobacter sakazakii (strain ATCC BAA-894) (Enterobacter sakazakii).